Consider the following 199-residue polypeptide: Peroxynitrite isomerase (199 aa).

The short motif at 21–27 (GEWEGRG) is the GXWXGXG element. His190 is a heme b binding site.

The protein belongs to the nitrobindin family. In terms of assembly, homodimer. Heme b serves as cofactor.

It catalyses the reaction peroxynitrite = nitrate. It participates in nitrogen metabolism. Heme-binding protein able to scavenge peroxynitrite and to protect free L-tyrosine against peroxynitrite-mediated nitration, by acting as a peroxynitrite isomerase that converts peroxynitrite to nitrate. Therefore, this protein likely plays a role in peroxynitrite sensing and in the detoxification of reactive nitrogen and oxygen species (RNS and ROS, respectively). Is able to bind nitric oxide (NO) in vitro, but may act as a sensor of peroxynitrite levels in vivo. This is Peroxynitrite isomerase from Paenarthrobacter aurescens (strain TC1).